A 255-amino-acid chain; its full sequence is Geranylgeranylglyceryl phosphate synthase (255 aa).

Residues aspartate 25 and serine 54 each coordinate Mg(2+). Sn-glycerol 1-phosphate contacts are provided by residues 173-179 (YLEGGSG), 203-204 (GG), and 225-226 (GT).

This sequence belongs to the GGGP/HepGP synthase family. Group II subfamily. Mg(2+) is required as a cofactor.

The protein resides in the cytoplasm. It catalyses the reaction sn-glycerol 1-phosphate + (2E,6E,10E)-geranylgeranyl diphosphate = sn-3-O-(geranylgeranyl)glycerol 1-phosphate + diphosphate. It participates in membrane lipid metabolism; glycerophospholipid metabolism. Its function is as follows. Prenyltransferase that catalyzes the transfer of the geranylgeranyl moiety of geranylgeranyl diphosphate (GGPP) to the C3 hydroxyl of sn-glycerol-1-phosphate (G1P). This reaction is the first ether-bond-formation step in the biosynthesis of archaeal membrane lipids. The polypeptide is Geranylgeranylglyceryl phosphate synthase (Thermofilum pendens (strain DSM 2475 / Hrk 5)).